Consider the following 82-residue polypeptide: MSAKNNIQDQLLNTARKDKLDLTIYLLNGVPLKGKVVSFDNFTIVLEQENKQSLVYKHAISTIIPAKIIKLYTEETKDAVQG.

Positions 9 to 69 (DQLLNTARKD…ISTIIPAKII (61 aa)) constitute a Sm domain.

It belongs to the Hfq family. Homohexamer.

Its function is as follows. RNA chaperone that binds small regulatory RNA (sRNAs) and mRNAs to facilitate mRNA translational regulation in response to envelope stress, environmental stress and changes in metabolite concentrations. Also binds with high specificity to tRNAs. In Leptospira borgpetersenii serovar Hardjo-bovis (strain L550), this protein is RNA-binding protein Hfq.